A 307-amino-acid chain; its full sequence is Opsin-like protein carO (307 aa).

N-linked (GlcNAc...) asparagine glycosylation occurs at asparagine 28. 7 helical membrane-spanning segments follow: residues tryptophan 36–methionine 56, isoleucine 64–alanine 84, tryptophan 118–proline 138, valine 140–valine 160, tryptophan 166–glutamate 186, phenylalanine 202–valine 222, and alanine 235–tryptophan 255. A disordered region spans residues glycine 280–alanine 307. N-linked (GlcNAc...) asparagine glycosylation occurs at asparagine 293. Over residues aspartate 294–alanine 307 the composition is skewed to polar residues.

It belongs to the archaeal/bacterial/fungal opsin family.

The protein resides in the membrane. Its function is as follows. Opsin-like protein; part of the car gene cluster that mediates the biosynthesis of neurosporaxanthin, a carboxylic apocarotenoid acting as an essential protective pigment and leading to orange pigmentation. The exact role of carO in carotenoid biosynthesis is not known yet, but it could be involved in the regulation of the pathway by light or other stimuli. The chain is Opsin-like protein carO from Fusarium fujikuroi (Bakanae and foot rot disease fungus).